Reading from the N-terminus, the 313-residue chain is Porphobilinogen deaminase (313 aa).

Cys241 is subject to S-(dipyrrolylmethanemethyl)cysteine.

This sequence belongs to the HMBS family. Monomer. Dipyrromethane is required as a cofactor.

It carries out the reaction 4 porphobilinogen + H2O = hydroxymethylbilane + 4 NH4(+). Its pathway is porphyrin-containing compound metabolism; protoporphyrin-IX biosynthesis; coproporphyrinogen-III from 5-aminolevulinate: step 2/4. In terms of biological role, tetrapolymerization of the monopyrrole PBG into the hydroxymethylbilane pre-uroporphyrinogen in several discrete steps. The protein is Porphobilinogen deaminase of Bacillus velezensis (strain DSM 23117 / BGSC 10A6 / LMG 26770 / FZB42) (Bacillus amyloliquefaciens subsp. plantarum).